Consider the following 218-residue polypeptide: Hypoxanthine-guanine phosphoribosyltransferase (218 aa).

Residue Lys69 coordinates GMP. Lys103 carries the N6-acetyllysine modification. Lys115 is covalently cross-linked (Glycyl lysine isopeptide (Lys-Gly) (interchain with G-Cter in SUMO1); alternate). Residue Lys115 forms a Glycyl lysine isopeptide (Lys-Gly) (interchain with G-Cter in SUMO2); alternate linkage. GMP is bound by residues 134-142, Lys166, 186-188, and Asp194; these read EDIIDTGKT and KFV. Residue Asp138 is the Proton acceptor of the active site. Thr142 carries the post-translational modification Phosphothreonine. A Mg(2+)-binding site is contributed by Asp194.

It belongs to the purine/pyrimidine phosphoribosyltransferase family. In terms of assembly, homotetramer. Mg(2+) is required as a cofactor.

The protein localises to the cytoplasm. The catalysed reaction is IMP + diphosphate = hypoxanthine + 5-phospho-alpha-D-ribose 1-diphosphate. It catalyses the reaction GMP + diphosphate = guanine + 5-phospho-alpha-D-ribose 1-diphosphate. Its pathway is purine metabolism; IMP biosynthesis via salvage pathway; IMP from hypoxanthine: step 1/1. In terms of biological role, converts guanine to guanosine monophosphate, and hypoxanthine to inosine monophosphate. Transfers the 5-phosphoribosyl group from 5-phosphoribosylpyrophosphate onto the purine. Plays a central role in the generation of purine nucleotides through the purine salvage pathway. The sequence is that of Hypoxanthine-guanine phosphoribosyltransferase (Hprt1) from Rattus norvegicus (Rat).